The primary structure comprises 375 residues: Succinyl-diaminopimelate desuccinylase (375 aa).

His66 serves as a coordination point for Zn(2+). Residue Asp68 is part of the active site. Asp99 is a Zn(2+) binding site. The active-site Proton acceptor is Glu133. Positions 134, 162, and 348 each coordinate Zn(2+).

It belongs to the peptidase M20A family. DapE subfamily. Homodimer. Zn(2+) serves as cofactor. Co(2+) is required as a cofactor.

It catalyses the reaction N-succinyl-(2S,6S)-2,6-diaminopimelate + H2O = (2S,6S)-2,6-diaminopimelate + succinate. It functions in the pathway amino-acid biosynthesis; L-lysine biosynthesis via DAP pathway; LL-2,6-diaminopimelate from (S)-tetrahydrodipicolinate (succinylase route): step 3/3. Its function is as follows. Catalyzes the hydrolysis of N-succinyl-L,L-diaminopimelic acid (SDAP), forming succinate and LL-2,6-diaminopimelate (DAP), an intermediate involved in the bacterial biosynthesis of lysine and meso-diaminopimelic acid, an essential component of bacterial cell walls. The sequence is that of Succinyl-diaminopimelate desuccinylase from Stenotrophomonas maltophilia (strain K279a).